Consider the following 681-residue polypeptide: DNA-directed RNA polymerase subunit beta' (681 aa).

C69, C71, C87, and C90 together coordinate Zn(2+). Mg(2+) is bound by residues D489, D491, and D493.

Belongs to the RNA polymerase beta' chain family. RpoC1 subfamily. As to quaternary structure, in plastids the minimal PEP RNA polymerase catalytic core is composed of four subunits: alpha, beta, beta', and beta''. When a (nuclear-encoded) sigma factor is associated with the core the holoenzyme is formed, which can initiate transcription. Requires Mg(2+) as cofactor. Zn(2+) is required as a cofactor.

Its subcellular location is the plastid. The protein resides in the chloroplast. The catalysed reaction is RNA(n) + a ribonucleoside 5'-triphosphate = RNA(n+1) + diphosphate. DNA-dependent RNA polymerase catalyzes the transcription of DNA into RNA using the four ribonucleoside triphosphates as substrates. The chain is DNA-directed RNA polymerase subunit beta' from Nicotiana sylvestris (Wood tobacco).